We begin with the raw amino-acid sequence, 409 residues long: D-galactonate dehydratase family member Achl_0790 (409 aa).

Aspartate 217 is a Mg(2+) binding site. Histidine 219 is a D-arabinonate binding site. Glutamate 243 and glutamate 269 together coordinate Mg(2+). D-arabinonate contacts are provided by glutamate 269, arginine 290, histidine 319, and glutamate 346.

This sequence belongs to the mandelate racemase/muconate lactonizing enzyme family. GalD subfamily.

Its function is as follows. Has no detectable activity with D-mannonate and with a panel of 70 other acid sugars (in vitro), in spite of the conservation of the residues that are expected to be important for catalytic activity and cofactor binding. May have evolved a divergent function. The polypeptide is D-galactonate dehydratase family member Achl_0790 (Pseudarthrobacter chlorophenolicus (strain ATCC 700700 / DSM 12829 / CIP 107037 / JCM 12360 / KCTC 9906 / NCIMB 13794 / A6) (Arthrobacter chlorophenolicus)).